A 501-amino-acid polypeptide reads, in one-letter code: L-aspartate decarboxylase dtxS4 (501 aa).

106–108 is a binding site for substrate; that stretch reads KLT. Lysine 320 bears the N6-(pyridoxal phosphate)lysine mark. Substrate is bound at residue arginine 474.

The protein belongs to the group II decarboxylase family. Pyridoxal 5'-phosphate serves as cofactor.

It carries out the reaction L-aspartate + H(+) = beta-alanine + CO2. It participates in secondary metabolite biosynthesis. L-aspartate decarboxylase; part of the gene cluster that mediates the biosynthesis of destruxins, insecticidal cyclic hexadepsipeptides which induce flaccid paralysis and visceral muscle contraction in insects through targeting the calcium channels and vacuolar-type ATPases. The aldo-keto reductase dtxS3 converts alpha-ketoisocaproic acid from deaminated leucine into alpha-hydroxyisocaproic acid (HIC), which is the first substrate for destruxin assembly by dtxS1. L-aspartate decarboxylase dtxS4 converts aspartic acid into beta-alanine, the last substrate for the destruxin assembly line performed by dtxS1. The nonribosomal peptide synthetase dtxS1 synthesizes destruxins B and B2, whereas the cytochrome P450 monooxygenase dtxS2 is required to convert destruxin B into other destruxin derivatives, including destructins C, D, A and E. Destruxin E-diol (ED) is further produced in a non-enzymatic manner from destruxin E. Destruxins play an important role in virulence and escape from insect host immune defenses. In Metarhizium robertsii (strain ARSEF 23 / ATCC MYA-3075) (Metarhizium anisopliae (strain ARSEF 23)), this protein is L-aspartate decarboxylase dtxS4.